The primary structure comprises 1375 residues: DNA-directed RNA polymerase subunit beta (1375 aa).

The protein belongs to the RNA polymerase beta chain family. As to quaternary structure, the RNAP catalytic core consists of 2 alpha, 1 beta, 1 beta' and 1 omega subunit. When a sigma factor is associated with the core the holoenzyme is formed, which can initiate transcription.

It carries out the reaction RNA(n) + a ribonucleoside 5'-triphosphate = RNA(n+1) + diphosphate. Functionally, DNA-dependent RNA polymerase catalyzes the transcription of DNA into RNA using the four ribonucleoside triphosphates as substrates. The protein is DNA-directed RNA polymerase subunit beta of Oleidesulfovibrio alaskensis (strain ATCC BAA-1058 / DSM 17464 / G20) (Desulfovibrio alaskensis).